The chain runs to 248 residues: PF03932 family protein CutC (248 aa).

The protein belongs to the CutC family. As to quaternary structure, homodimer.

The protein resides in the cytoplasm. This chain is PF03932 family protein CutC, found in Salmonella schwarzengrund (strain CVM19633).